The chain runs to 345 residues: NADPH dehydrogenase (345 aa).

23–26 serves as a coordination point for FMN; sequence SPMC. A substrate-binding site is contributed by tyrosine 28. 2 residues coordinate FMN: alanine 60 and glutamine 102. A substrate-binding site is contributed by 164–167; the sequence is HGAH. FMN is bound by residues arginine 215 and 307–308; that span reads GR.

It belongs to the NADH:flavin oxidoreductase/NADH oxidase family. NamA subfamily. As to quaternary structure, homotetramer. Requires FMN as cofactor.

The catalysed reaction is A + NADPH + H(+) = AH2 + NADP(+). Functionally, catalyzes the reduction of the double bond of an array of alpha,beta-unsaturated aldehydes and ketones. It also reduces the nitro group of nitroester and nitroaromatic compounds. It could have a role in detoxification processes. The polypeptide is NADPH dehydrogenase (Bacillus anthracis (strain CDC 684 / NRRL 3495)).